A 349-amino-acid polypeptide reads, in one-letter code: UPF0324 inner membrane protein YeiH (349 aa).

The Periplasmic portion of the chain corresponds to 1-12; it reads MTNITLQKQHRT. Residues 13-32 traverse the membrane as a helical segment; that stretch reads LWHFIPGLALSAVITGVALW. Residues 33-35 are Cytoplasmic-facing; sequence GGS. The chain crosses the membrane as a helical span at residues 36–58; that stretch reads IPAVAGAGFSALTLAILLGMVLG. The Periplasmic portion of the chain corresponds to 59–99; sequence NTIYPHIWKSCDGGVLFAKQYLLRLGIILYGFRLTFSQIAD. The chain crosses the membrane as a helical span at residues 100 to 122; sequence VGISGIIIDVLTLSSTFLLACFL. The Cytoplasmic portion of the chain corresponds to 123–131; sequence GQKVFGLDK. A helical transmembrane segment spans residues 132–151; that stretch reads HTSWLIGAGSSICGAAAVLA. Topologically, residues 152-162 are periplasmic; the sequence is TEPVVKAEASK. A helical membrane pass occupies residues 163–185; sequence VTVAVATVVIFGTVAIFLYPAIY. Residues 186-261 are Cytoplasmic-facing; sequence PLMSQWFSPE…SGTNSGEKSK (76 aa). A helical membrane pass occupies residues 262–283; it reads ITIPWFAILFIVVAIFNSFHLL. The Periplasmic segment spans residues 284–289; the sequence is PQSVVN. The chain crosses the membrane as a helical span at residues 290–312; sequence MLVTLDTFLLAMAMAALGLTTHV. Residues 313–321 are Cytoplasmic-facing; it reads SALKKAGAK. Residues 322–344 form a helical membrane-spanning segment; it reads PLLMALVLFAWLIVGGGAINYVI. Topologically, residues 345 to 349 are periplasmic; it reads QSVIA.

This sequence belongs to the UPF0324 family.

It localises to the cell inner membrane. In Escherichia coli O6:H1 (strain CFT073 / ATCC 700928 / UPEC), this protein is UPF0324 inner membrane protein YeiH (yeiH).